We begin with the raw amino-acid sequence, 212 residues long: Ferric nitrobindin-like protein (212 aa).

Over residues 1–11 the composition is skewed to basic and acidic residues; it reads MTSSDQPERGS. The segment at 1 to 36 is disordered; sequence MTSSDQPERGSGDAAVQAAAERAEQTRGRNVPQFDD. Positions 64-70 match the GXWXGXG motif; it reads GVWRGDG.

The protein belongs to the nitrobindin family.

The sequence is that of Ferric nitrobindin-like protein from Saccharopolyspora erythraea (strain ATCC 11635 / DSM 40517 / JCM 4748 / NBRC 13426 / NCIMB 8594 / NRRL 2338).